A 916-amino-acid polypeptide reads, in one-letter code: Protein translocase subunit SecA (916 aa).

ATP contacts are provided by residues Gln88, 106–110, and Asp519; that span reads GEGKT. Zn(2+) is bound by residues Cys902, Cys904, Cys913, and Cys914.

The protein belongs to the SecA family. In terms of assembly, monomer and homodimer. Part of the essential Sec protein translocation apparatus which comprises SecA, SecYEG and auxiliary proteins SecDF. Other proteins may also be involved. Requires Zn(2+) as cofactor.

The protein localises to the cell inner membrane. Its subcellular location is the cytoplasm. The enzyme catalyses ATP + H2O + cellular proteinSide 1 = ADP + phosphate + cellular proteinSide 2.. Functionally, part of the Sec protein translocase complex. Interacts with the SecYEG preprotein conducting channel. Has a central role in coupling the hydrolysis of ATP to the transfer of proteins into and across the cell membrane, serving as an ATP-driven molecular motor driving the stepwise translocation of polypeptide chains across the membrane. This is Protein translocase subunit SecA from Treponema pallidum (strain Nichols).